A 105-amino-acid chain; its full sequence is MNDSEFIQLADQLYQKIEEKIEESGADVDYDQNGSLLTLEFENHTKLIINRQQPLHQVWLATLENGHHYDYNNGKWIDDRSGDEFLTFLSAAIFKQSKETVDFTE.

The protein belongs to the frataxin family.

Functionally, involved in iron-sulfur (Fe-S) cluster assembly. May act as a regulator of Fe-S biogenesis. This is Iron-sulfur cluster assembly protein CyaY from Psychromonas ingrahamii (strain DSM 17664 / CCUG 51855 / 37).